Reading from the N-terminus, the 725-residue chain is Endoglucanase G (725 aa).

Positions 1–35 (MLKTKRKLTKAIGVALSISILSSLVSFIPQTNTYA) are cleaved as a signal peptide. Residue D93 is the Nucleophile of the active site. Residues H408, D446, and E455 contribute to the active site. The 162-residue stretch at 489 to 650 (ITNDEVIIKA…GVKVFGNEPA (162 aa)) folds into the CBM3 domain. The region spanning 658 to 724 (PEILYGDVNS…LLGTITQLPQ (67 aa)) is the Dockerin domain.

Belongs to the glycosyl hydrolase 9 (cellulase E) family.

The enzyme catalyses Endohydrolysis of (1-&gt;4)-beta-D-glucosidic linkages in cellulose, lichenin and cereal beta-D-glucans.. It participates in glycan metabolism; cellulose degradation. The biological conversion of cellulose to glucose generally requires three types of hydrolytic enzymes: (1) Endoglucanases which cut internal beta-1,4-glucosidic bonds; (2) Exocellobiohydrolases that cut the disaccharide cellobiose from the non-reducing end of the cellulose polymer chain; (3) Beta-1,4-glucosidases which hydrolyze the cellobiose and other short cello-oligosaccharides to glucose. The sequence is that of Endoglucanase G (celCCG) from Ruminiclostridium cellulolyticum (strain ATCC 35319 / DSM 5812 / JCM 6584 / H10) (Clostridium cellulolyticum).